The chain runs to 320 residues: Lipoyl synthase (320 aa).

The interval 1–27 (MRVEIDHRNSGGGKLRHPEKQHRPDNP) is disordered. Residues 16–25 (RHPEKQHRPD) show a composition bias toward basic and acidic residues. Residues Cys-61, Cys-66, Cys-72, Cys-87, Cys-91, Cys-94, and Ser-300 each contribute to the [4Fe-4S] cluster site. The Radical SAM core domain occupies 73–289 (WSQRHATMMI…AAMARAKGFL (217 aa)).

Belongs to the radical SAM superfamily. Lipoyl synthase family. The cofactor is [4Fe-4S] cluster.

It is found in the cytoplasm. The enzyme catalyses [[Fe-S] cluster scaffold protein carrying a second [4Fe-4S](2+) cluster] + N(6)-octanoyl-L-lysyl-[protein] + 2 oxidized [2Fe-2S]-[ferredoxin] + 2 S-adenosyl-L-methionine + 4 H(+) = [[Fe-S] cluster scaffold protein] + N(6)-[(R)-dihydrolipoyl]-L-lysyl-[protein] + 4 Fe(3+) + 2 hydrogen sulfide + 2 5'-deoxyadenosine + 2 L-methionine + 2 reduced [2Fe-2S]-[ferredoxin]. The protein operates within protein modification; protein lipoylation via endogenous pathway; protein N(6)-(lipoyl)lysine from octanoyl-[acyl-carrier-protein]: step 2/2. Catalyzes the radical-mediated insertion of two sulfur atoms into the C-6 and C-8 positions of the octanoyl moiety bound to the lipoyl domains of lipoate-dependent enzymes, thereby converting the octanoylated domains into lipoylated derivatives. This is Lipoyl synthase from Acidiphilium cryptum (strain JF-5).